Reading from the N-terminus, the 133-residue chain is Small ribosomal subunit protein uS8 (133 aa).

This sequence belongs to the universal ribosomal protein uS8 family. As to quaternary structure, part of the 30S ribosomal subunit. Contacts proteins S5 and S12.

Its function is as follows. One of the primary rRNA binding proteins, it binds directly to 16S rRNA central domain where it helps coordinate assembly of the platform of the 30S subunit. This is Small ribosomal subunit protein uS8 from Deinococcus deserti (strain DSM 17065 / CIP 109153 / LMG 22923 / VCD115).